The following is a 181-amino-acid chain: uncharacterized protein (181 aa).

This is an uncharacterized protein from Ictalurid herpesvirus 1 (strain Auburn) (IcHV-1).